A 192-amino-acid chain; its full sequence is MKFLLRASSLAGQSLRFASQRPKVFFDVSIGEEPAGRVTMELFNDVVPKTAENFRALCTGEKGVGEQGVALHFKGSKFHRIIPEFMIQGGDFTRHNGTGGESIYGNKFKDENFDLKHTGPGCLSMANAGPNTNGSQFFICTVDTPWLDGGHVVFGQVTDGMSVVKKIEKMGSRSGAPAKTVTIADCGELKSE.

Residues 25–188 (FFDVSIGEEP…KTVTIADCGE (164 aa)) form the PPIase cyclophilin-type domain.

Belongs to the cyclophilin-type PPIase family.

It carries out the reaction [protein]-peptidylproline (omega=180) = [protein]-peptidylproline (omega=0). Its function is as follows. PPIases accelerate the folding of proteins. It catalyzes the cis-trans isomerization of proline imidic peptide bonds in oligopeptides. This Caenorhabditis elegans protein is Peptidyl-prolyl cis-trans isomerase 1 (cyn-1).